A 313-amino-acid chain; its full sequence is Probable cell division protein WhiA (313 aa).

The H-T-H motif DNA-binding region spans 276 to 309 (SLKELGEMLHPKLGKSGVNHRLRKLDEIAERIRK).

This sequence belongs to the WhiA family.

Involved in cell division and chromosome segregation. In Ruminiclostridium cellulolyticum (strain ATCC 35319 / DSM 5812 / JCM 6584 / H10) (Clostridium cellulolyticum), this protein is Probable cell division protein WhiA.